The primary structure comprises 708 residues: Leukotoxin translocation ATP-binding protein LktB (708 aa).

The region spanning Met-1–Val-126 is the Peptidase C39 domain. The ABC transmembrane type-1 domain maps to Phe-155–Gln-437. The next 5 helical transmembrane spans lie at Leu-159–Val-179, Leu-192–Leu-212, Ala-270–Tyr-290, Leu-296–Leu-316, and Val-389–Gly-409. The ABC transporter domain maps to Ile-469 to Gln-704. Gly-503–Ser-510 serves as a coordination point for ATP.

It belongs to the ABC transporter superfamily. Protein-1 exporter (TC 3.A.1.109) family. Homodimer.

It is found in the cell inner membrane. The enzyme catalyses ATP + H2O + proteinSide 1 = ADP + phosphate + proteinSide 2.. Functionally, part of the ABC transporter complex LktBD involved in leukotoxin export. Transmembrane domains (TMD) form a pore in the inner membrane and the ATP-binding domain (NBD) is responsible for energy generation. The polypeptide is Leukotoxin translocation ATP-binding protein LktB (lktB) (Mannheimia haemolytica (Pasteurella haemolytica)).